A 213-amino-acid chain; its full sequence is MARYIGPKLKLSRREGTDLQLKSGVKPYDVKTKKAGRVPGQHGNTRNKASEYSLQLREKQKVKRMYGVLERQFANYYKESARARGATGEHLLQMLERRLDNVVYRMGFGSTRAEARQLVSHRAVMIKKAGRDEFVRVNIPSIQVQDGDVIAIHEKAKEQLRIKNAIELATQRGIPEWLEVDHSKMQGTFKQAPDRIDLPAEITESLIVELYSK.

One can recognise an S4 RNA-binding domain in the interval 97 to 165; that stretch reads RRLDNVVYRM…AKEQLRIKNA (69 aa).

Belongs to the universal ribosomal protein uS4 family. As to quaternary structure, part of the 30S ribosomal subunit. Contacts protein S5. The interaction surface between S4 and S5 is involved in control of translational fidelity.

In terms of biological role, one of the primary rRNA binding proteins, it binds directly to 16S rRNA where it nucleates assembly of the body of the 30S subunit. With S5 and S12 plays an important role in translational accuracy. In Psychrobacter sp. (strain PRwf-1), this protein is Small ribosomal subunit protein uS4.